A 569-amino-acid chain; its full sequence is Urease subunit alpha (569 aa).

In terms of domain architecture, Urease spans 131-569; that stretch reads GGIDTHIHFI…LPMAQRYFLL (439 aa). 3 residues coordinate Ni(2+): His-136, His-138, and Lys-219. At Lys-219 the chain carries N6-carboxylysine. Position 221 (His-221) interacts with substrate. Positions 248 and 274 each coordinate Ni(2+). His-322 (proton donor) is an active-site residue. Asp-362 lines the Ni(2+) pocket.

This sequence belongs to the metallo-dependent hydrolases superfamily. Urease alpha subunit family. Heterotrimer of UreA (gamma), UreB (beta) and UreC (alpha) subunits. Three heterotrimers associate to form the active enzyme. The cofactor is Ni cation. In terms of processing, carboxylation allows a single lysine to coordinate two nickel ions.

It is found in the cytoplasm. The catalysed reaction is urea + 2 H2O + H(+) = hydrogencarbonate + 2 NH4(+). It functions in the pathway nitrogen metabolism; urea degradation; CO(2) and NH(3) from urea (urease route): step 1/1. The chain is Urease subunit alpha from Synechococcus sp. (strain RCC307).